Reading from the N-terminus, the 419-residue chain is Protein FAM181B (419 aa).

Residues leucine 107 to alanine 157 form a disordered region.

Belongs to the FAM181 family.

The sequence is that of Protein FAM181B (FAM181B) from Bos taurus (Bovine).